We begin with the raw amino-acid sequence, 417 residues long: Gamma-glutamyl phosphate reductase (417 aa).

The protein belongs to the gamma-glutamyl phosphate reductase family.

It is found in the cytoplasm. The catalysed reaction is L-glutamate 5-semialdehyde + phosphate + NADP(+) = L-glutamyl 5-phosphate + NADPH + H(+). It participates in amino-acid biosynthesis; L-proline biosynthesis; L-glutamate 5-semialdehyde from L-glutamate: step 2/2. Functionally, catalyzes the NADPH-dependent reduction of L-glutamate 5-phosphate into L-glutamate 5-semialdehyde and phosphate. The product spontaneously undergoes cyclization to form 1-pyrroline-5-carboxylate. The sequence is that of Gamma-glutamyl phosphate reductase from Escherichia coli O6:K15:H31 (strain 536 / UPEC).